The sequence spans 356 residues: MKRDLLLTKIEEYKNIMPWYVLDYYQSKLSVPYSFTTLYEYLKEYKRFFEWLIDSDLSKAARIADVDLTTLEHLSKKDMEAFILYLRERPSLNIYSTKKGVSQTTINRTLSALSSLYKYLTEEVENEHGEPYFYRNVMKKVATKKKRETLAARAENIKQKLFLGDETMAFLDYVDKEYEYKLSNRAKASFRKNKERDLAIIALLLASGIRLSEAVNLDLKDVNLNMMLVEVTRKGGKRDSVNVAAFAKPHLEAYLSVRKDRYQAEKQDVAFFLTAYRGLPNRIDASSIEKMVGKYSEGFKIRVTPHKLRHTLATRLYDTTKSQVLVSHQLGHASTQVTDLYTHIVNDEQKNALDKL.

A Core-binding (CB) domain is found at 16-121 (IMPWYVLDYY…ALSSLYKYLT (106 aa)). One can recognise a Tyr recombinase domain in the interval 169-354 (AFLDYVDKEY…VNDEQKNALD (186 aa)). Active-site residues include Arg-210, Lys-234, His-306, Arg-309, and His-332. Residue Tyr-341 is the O-(3'-phospho-DNA)-tyrosine intermediate of the active site.

This sequence belongs to the 'phage' integrase family. XerS subfamily.

The protein localises to the cytoplasm. Its activity is regulated as follows. FtsK is required for recombination. Functionally, site-specific tyrosine recombinase, which acts by catalyzing the cutting and rejoining of the recombining DNA molecules. Essential to convert dimers of the bacterial chromosome into monomers to permit their segregation at cell division. The chain is Tyrosine recombinase XerS from Streptococcus equi subsp. equi (strain 4047).